The primary structure comprises 417 residues: Acetate kinase (417 aa).

Asn-7 serves as a coordination point for Mg(2+). Lys-14 contributes to the ATP binding site. A substrate-binding site is contributed by Arg-104. Asp-162 functions as the Proton donor/acceptor in the catalytic mechanism. Residues 222–226 (HLGNG), 297–299 (DMR), and 346–350 (GIGEN) each bind ATP. Glu-401 is a binding site for Mg(2+).

Belongs to the acetokinase family. As to quaternary structure, homodimer. Requires Mg(2+) as cofactor. The cofactor is Mn(2+).

The protein resides in the cytoplasm. The enzyme catalyses acetate + ATP = acetyl phosphate + ADP. It functions in the pathway metabolic intermediate biosynthesis; acetyl-CoA biosynthesis; acetyl-CoA from acetate: step 1/2. Its function is as follows. Catalyzes the formation of acetyl phosphate from acetate and ATP. Can also catalyze the reverse reaction. This Chloroherpeton thalassium (strain ATCC 35110 / GB-78) protein is Acetate kinase.